The chain runs to 107 residues: Large ribosomal subunit protein uL24 (107 aa).

The protein belongs to the universal ribosomal protein uL24 family. As to quaternary structure, part of the 50S ribosomal subunit.

One of two assembly initiator proteins, it binds directly to the 5'-end of the 23S rRNA, where it nucleates assembly of the 50S subunit. Functionally, one of the proteins that surrounds the polypeptide exit tunnel on the outside of the subunit. This chain is Large ribosomal subunit protein uL24, found in Thermotoga neapolitana (strain ATCC 49049 / DSM 4359 / NBRC 107923 / NS-E).